We begin with the raw amino-acid sequence, 66 residues long: UPF0434 protein RPC_0266 (66 aa).

It belongs to the UPF0434 family.

In Rhodopseudomonas palustris (strain BisB18), this protein is UPF0434 protein RPC_0266.